Here is a 342-residue protein sequence, read N- to C-terminus: Dihydroorotase (342 aa).

Zn(2+) is bound by residues His13 and His15. Substrate contacts are provided by residues His15 to Arg17 and Asn41. The Zn(2+) site is built by Lys98, His135, and His173. Position 98 is an N6-carboxylysine (Lys98). His135 provides a ligand contact to substrate. Leu218 lines the substrate pocket. A Zn(2+)-binding site is contributed by Asp246. Asp246 is an active-site residue. Substrate-binding residues include His250 and Ala262.

It belongs to the metallo-dependent hydrolases superfamily. DHOase family. Class II DHOase subfamily. In terms of assembly, homodimer. The cofactor is Zn(2+).

It catalyses the reaction (S)-dihydroorotate + H2O = N-carbamoyl-L-aspartate + H(+). Its pathway is pyrimidine metabolism; UMP biosynthesis via de novo pathway; (S)-dihydroorotate from bicarbonate: step 3/3. In terms of biological role, catalyzes the reversible cyclization of carbamoyl aspartate to dihydroorotate. This chain is Dihydroorotase, found in Aliivibrio salmonicida (strain LFI1238) (Vibrio salmonicida (strain LFI1238)).